Reading from the N-terminus, the 90-residue chain is Acylphosphatase (90 aa).

An Acylphosphatase-like domain is found at 5 to 90 (CLKAWVTGRV…DPPPGTFELG (86 aa)). Residues R20 and N38 contribute to the active site.

This sequence belongs to the acylphosphatase family.

It catalyses the reaction an acyl phosphate + H2O = a carboxylate + phosphate + H(+). The chain is Acylphosphatase (acyP) from Chromohalobacter salexigens (strain ATCC BAA-138 / DSM 3043 / CIP 106854 / NCIMB 13768 / 1H11).